The sequence spans 61 residues: Small ribosomal subunit protein uS14B (61 aa).

The Zn(2+) site is built by Cys-24, Cys-27, Cys-40, and Cys-43.

This sequence belongs to the universal ribosomal protein uS14 family. Zinc-binding uS14 subfamily. As to quaternary structure, part of the 30S ribosomal subunit. Contacts proteins S3 and S10. The cofactor is Zn(2+).

In terms of biological role, binds 16S rRNA, required for the assembly of 30S particles and may also be responsible for determining the conformation of the 16S rRNA at the A site. This Staphylococcus epidermidis (strain ATCC 35984 / DSM 28319 / BCRC 17069 / CCUG 31568 / BM 3577 / RP62A) protein is Small ribosomal subunit protein uS14B.